A 493-amino-acid polypeptide reads, in one-letter code: Cobyric acid synthase (493 aa).

The GATase cobBQ-type domain maps to 252–440 (PVKIVVLRLR…IHGIFESDSL (189 aa)). The active-site Nucleophile is Cys-333. Residue His-432 is part of the active site.

Belongs to the CobB/CobQ family. CobQ subfamily.

It participates in cofactor biosynthesis; adenosylcobalamin biosynthesis. Its function is as follows. Catalyzes amidations at positions B, D, E, and G on adenosylcobyrinic A,C-diamide. NH(2) groups are provided by glutamine, and one molecule of ATP is hydrogenolyzed for each amidation. The chain is Cobyric acid synthase from Thermodesulfovibrio yellowstonii (strain ATCC 51303 / DSM 11347 / YP87).